Consider the following 199-residue polypeptide: Recombination protein RecR (199 aa).

The segment at 58–73 adopts a C4-type zinc-finger fold; the sequence is CRICYNITDTEVCNIC. The 96-residue stretch at 81–176 folds into the Toprim domain; that stretch reads SLICVVSHPM…KVTRIAHGVP (96 aa).

This sequence belongs to the RecR family.

May play a role in DNA repair. It seems to be involved in an RecBC-independent recombinational process of DNA repair. It may act with RecF and RecO. The protein is Recombination protein RecR of Thermoanaerobacter pseudethanolicus (strain ATCC 33223 / 39E) (Clostridium thermohydrosulfuricum).